Consider the following 141-residue polypeptide: Large ribosomal subunit protein uL16 (141 aa).

Over residues 1 to 17 (MLMPKRTKFRKQMKGRN) the composition is skewed to basic residues. Residues 1-22 (MLMPKRTKFRKQMKGRNRGYAT) are disordered.

This sequence belongs to the universal ribosomal protein uL16 family. In terms of assembly, part of the 50S ribosomal subunit.

Functionally, binds 23S rRNA and is also seen to make contacts with the A and possibly P site tRNAs. This chain is Large ribosomal subunit protein uL16, found in Campylobacter curvus (strain 525.92).